Reading from the N-terminus, the 128-residue chain is LIM domain-containing protein 2 (128 aa).

Position 1 is an N-acetylmethionine (methionine 1). The segment at 1–25 (MFQAAGAAQATPSHEAKGSSGSSTV) is disordered. The LIM zinc-binding domain maps to 39-99 (ETCAACQKTV…RPHFQQLFKS (61 aa)). Zn(2+) contacts are provided by cysteine 41, cysteine 44, histidine 62, cysteine 65, cysteine 68, cysteine 71, cysteine 89, and histidine 92.

As to quaternary structure, interacts with ILK.

The protein localises to the cytoplasm. The protein resides in the nucleus. Acts as an activator of the protein-kinase ILK, thereby regulating cell motility. This Mus musculus (Mouse) protein is LIM domain-containing protein 2.